Here is a 135-residue protein sequence, read N- to C-terminus: MSALKSLVPARFLTLTAHLVIIITIFWSRDNNIQSCLPLEFTEDQYRTEDTRLTVALSVTLALFVLELAGFLSGVSMFNSNQALLSLITHSSACVCLSFFVFHQWPCWTYWIIFSICSVFPAVVELFLLLSQRVL.

Transmembrane regions (helical) follow at residues 7–27 (LVPA…TIFW), 55–75 (VALS…LSGV), 83–103 (ALLS…FVFH), and 110–130 (YWII…FLLL).

The protein localises to the membrane. Functionally, may play a role in cilia formation and embryonic patterning. In Danio rerio (Zebrafish), this protein is Transmembrane protein 107 (tmem107).